The sequence spans 253 residues: 5'-nucleotidase SurE (253 aa).

4 residues coordinate a divalent metal cation: Asp-8, Asp-9, Ser-39, and Asn-95.

The protein belongs to the SurE nucleotidase family. The cofactor is a divalent metal cation.

It localises to the cytoplasm. It carries out the reaction a ribonucleoside 5'-phosphate + H2O = a ribonucleoside + phosphate. In terms of biological role, nucleotidase that shows phosphatase activity on nucleoside 5'-monophosphates. The polypeptide is 5'-nucleotidase SurE (Clostridium beijerinckii (strain ATCC 51743 / NCIMB 8052) (Clostridium acetobutylicum)).